The primary structure comprises 328 residues: tRNA dimethylallyltransferase (328 aa).

10-17 (GPTASGKT) is an ATP binding site. 12–17 (TASGKT) provides a ligand contact to substrate.

This sequence belongs to the IPP transferase family. Monomer. The cofactor is Mg(2+).

It catalyses the reaction adenosine(37) in tRNA + dimethylallyl diphosphate = N(6)-dimethylallyladenosine(37) in tRNA + diphosphate. Its function is as follows. Catalyzes the transfer of a dimethylallyl group onto the adenine at position 37 in tRNAs that read codons beginning with uridine, leading to the formation of N6-(dimethylallyl)adenosine (i(6)A). This Bifidobacterium longum (strain NCC 2705) protein is tRNA dimethylallyltransferase.